The following is a 185-amino-acid chain: Ribosome-recycling factor (185 aa).

Belongs to the RRF family.

It is found in the cytoplasm. Its function is as follows. Responsible for the release of ribosomes from messenger RNA at the termination of protein biosynthesis. May increase the efficiency of translation by recycling ribosomes from one round of translation to another. This chain is Ribosome-recycling factor, found in Ehrlichia chaffeensis (strain ATCC CRL-10679 / Arkansas).